The following is a 605-amino-acid chain: Acetyl-coenzyme A carboxylase carboxyl transferase subunits beta/alpha (605 aa).

Residues 1 to 269 are acetyl-coenzyme A carboxylase carboxyl transferase subunit beta; sequence MFKGLFKKTK…QRAEFLLKHG (269 aa). Positions 40–306 constitute a CoA carboxyltransferase N-terminal domain; it reads LWEKCDSCKS…SRMLDGNDCS (267 aa). Residues 40 to 570 are carboxyltransferase; it reads LWEKCDSCKS…KNNLLKTLDN (531 aa). Residues C44, C47, C63, and C66 each contribute to the Zn(2+) site. The segment at 44–66 adopts a C4-type zinc-finger fold; that stretch reads CDSCKSIIYAEDLKKNYHICHEC. The acetyl-coenzyme A carboxylase carboxyl transferase subunit alpha stretch occupies residues 270-593; it reads FVDKVINRKE…YEKFRSIGRF (324 aa). One can recognise a CoA carboxyltransferase C-terminal domain in the interval 317–570; sequence ASAKSVEEIR…KNNLLKTLDN (254 aa).

The protein in the N-terminal section; belongs to the AccD/PCCB family. This sequence in the C-terminal section; belongs to the AccA family. As to quaternary structure, acetyl-CoA carboxylase is a heterotetramer composed of biotin carboxyl carrier protein (AccB), biotin carboxylase (AccC) and two subunits of ACCase subunit beta/alpha. Requires Zn(2+) as cofactor.

Its subcellular location is the cytoplasm. The catalysed reaction is N(6)-carboxybiotinyl-L-lysyl-[protein] + acetyl-CoA = N(6)-biotinyl-L-lysyl-[protein] + malonyl-CoA. It functions in the pathway lipid metabolism; malonyl-CoA biosynthesis; malonyl-CoA from acetyl-CoA: step 1/1. In terms of biological role, component of the acetyl coenzyme A carboxylase (ACC) complex. Biotin carboxylase (BC) catalyzes the carboxylation of biotin on its carrier protein (BCCP) and then the CO(2) group is transferred by the transcarboxylase to acetyl-CoA to form malonyl-CoA. This chain is Acetyl-coenzyme A carboxylase carboxyl transferase subunits beta/alpha (accD), found in Natranaerobius thermophilus (strain ATCC BAA-1301 / DSM 18059 / JW/NM-WN-LF).